The chain runs to 301 residues: HPr kinase/phosphorylase (301 aa).

Active-site residues include histidine 134 and lysine 155. 149 to 156 (GKSGLGKS) contributes to the ATP binding site. Residue serine 156 coordinates Mg(2+). The active-site Proton acceptor; for phosphorylation activity. Proton donor; for dephosphorylation activity is the aspartate 173. The important for the catalytic mechanism of both phosphorylation and dephosphorylation stretch occupies residues 196 to 205 (LEVRGLGIIN). Glutamate 197 serves as a coordination point for Mg(2+). Residue arginine 239 is part of the active site. Residues 260-265 (PITPGK) form an important for the catalytic mechanism of dephosphorylation region.

The protein belongs to the HPrK/P family. In terms of assembly, homohexamer. The cofactor is Mg(2+).

The catalysed reaction is [HPr protein]-L-serine + ATP = [HPr protein]-O-phospho-L-serine + ADP + H(+). It catalyses the reaction [HPr protein]-O-phospho-L-serine + phosphate + H(+) = [HPr protein]-L-serine + diphosphate. Functionally, catalyzes the ATP- as well as the pyrophosphate-dependent phosphorylation of a specific serine residue in HPr, a phosphocarrier protein of the phosphoenolpyruvate-dependent sugar phosphotransferase system (PTS). HprK/P also catalyzes the pyrophosphate-producing, inorganic phosphate-dependent dephosphorylation (phosphorolysis) of seryl-phosphorylated HPr (P-Ser-HPr). The two antagonistic activities of HprK/P are regulated by several intracellular metabolites, which change their concentration in response to the absence or presence of rapidly metabolisable carbon sources (glucose, fructose, etc.) in the growth medium. Therefore, by controlling the phosphorylation state of HPr, HPrK/P is a sensor enzyme that plays a major role in the regulation of carbon metabolism and sugar transport: it mediates carbon catabolite repression (CCR), and regulates PTS-catalyzed carbohydrate uptake and inducer exclusion. This is HPr kinase/phosphorylase from Malacoplasma penetrans (strain HF-2) (Mycoplasma penetrans).